A 375-amino-acid chain; its full sequence is Protein MGF 360-5L (375 aa).

The protein belongs to the asfivirus MGF 360 family.

Functionally, plays a role in virus cell tropism, and may be required for efficient virus replication in macrophages. This African swine fever virus (isolate Portugal/Lis 57/1957) (ASFV) protein is Protein MGF 360-5L.